We begin with the raw amino-acid sequence, 525 residues long: Sensory neuron membrane protein 1 (525 aa).

Topologically, residues 1–11 (MLLPKPLKYAA) are cytoplasmic. A helical transmembrane segment spans residues 12–32 (IGGGVFVFGILIGWVIFPVIL). Residues 33–456 (KSQIKKEMAL…LKHQLFIPKR (424 aa)) are Extracellular-facing. Asn67, Asn105, and Asn229 each carry an N-linked (GlcNAc...) asparagine glycan. Cystine bridges form between Cys268/Cys333, Cys297/Cys352, and Cys335/Cys341. An N-linked (GlcNAc...) asparagine glycan is attached at Asn440. The helical transmembrane segment at 457–477 (IVGVIRWWMVSFGLIAVLAGV) threads the bilayer. The Cytoplasmic portion of the chain corresponds to 478–525 (MYHFKDNIMGWAAKGESTTAKVNPEDGSNEQRGVSVIGQDREPPKVTM). The tract at residues 496 to 525 (TAKVNPEDGSNEQRGVSVIGQDREPPKVTM) is disordered. Over residues 516–525 (QDREPPKVTM) the composition is skewed to basic and acidic residues.

The protein belongs to the CD36 family. As to expression, principal component of the olfactory cilia membrane. Localizes to the somata, dendritic neck and cilia of the olfactory neurons (at protein level). Not detected in the axons of ORNs, the cytoplasm of auxiliary cells or non-sensory structures. Expression is universal among ORNs but differential between neuron and sensillum types.

Its subcellular location is the cell membrane. In terms of biological role, plays an olfactory role that is not restricted to pheromone sensitivity. May be involved in the odor detection properties of the olfactory receptor neurons (ORNs) rather than their differentiation and growth. The sequence is that of Sensory neuron membrane protein 1 from Antheraea polyphemus (Polyphemus moth).